Consider the following 359-residue polypeptide: UDP-N-acetylglucosamine--N-acetylmuramyl-(pentapeptide) pyrophosphoryl-undecaprenol N-acetylglucosamine transferase (359 aa).

UDP-N-acetyl-alpha-D-glucosamine contacts are provided by residues 13-15 (TAG), Asn125, Arg161, Ser193, Ile241, and Gln285.

The protein belongs to the glycosyltransferase 28 family. MurG subfamily.

It localises to the cell membrane. The enzyme catalyses di-trans,octa-cis-undecaprenyl diphospho-N-acetyl-alpha-D-muramoyl-L-alanyl-D-glutamyl-meso-2,6-diaminopimeloyl-D-alanyl-D-alanine + UDP-N-acetyl-alpha-D-glucosamine = di-trans,octa-cis-undecaprenyl diphospho-[N-acetyl-alpha-D-glucosaminyl-(1-&gt;4)]-N-acetyl-alpha-D-muramoyl-L-alanyl-D-glutamyl-meso-2,6-diaminopimeloyl-D-alanyl-D-alanine + UDP + H(+). Its pathway is cell wall biogenesis; peptidoglycan biosynthesis. Functionally, cell wall formation. Catalyzes the transfer of a GlcNAc subunit on undecaprenyl-pyrophosphoryl-MurNAc-pentapeptide (lipid intermediate I) to form undecaprenyl-pyrophosphoryl-MurNAc-(pentapeptide)GlcNAc (lipid intermediate II). This chain is UDP-N-acetylglucosamine--N-acetylmuramyl-(pentapeptide) pyrophosphoryl-undecaprenol N-acetylglucosamine transferase, found in Corynebacterium diphtheriae (strain ATCC 700971 / NCTC 13129 / Biotype gravis).